The chain runs to 377 residues: UDP-N-acetylenolpyruvoylglucosamine reductase (377 aa).

Residues 48–215 form the FAD-binding PCMH-type domain; that stretch reads LGGTPMAAVR…LGITLQLHTD (168 aa). Arg-193 is a catalytic residue. Ser-268 (proton donor) is an active-site residue. Glu-369 is an active-site residue.

Belongs to the MurB family. Requires FAD as cofactor.

It localises to the cytoplasm. It carries out the reaction UDP-N-acetyl-alpha-D-muramate + NADP(+) = UDP-N-acetyl-3-O-(1-carboxyvinyl)-alpha-D-glucosamine + NADPH + H(+). The protein operates within cell wall biogenesis; peptidoglycan biosynthesis. In terms of biological role, cell wall formation. The sequence is that of UDP-N-acetylenolpyruvoylglucosamine reductase from Corynebacterium diphtheriae (strain ATCC 700971 / NCTC 13129 / Biotype gravis).